We begin with the raw amino-acid sequence, 540 residues long: Zinc finger CCCH domain-containing protein 46 (540 aa).

The C3H1-type zinc-finger motif lies at 148-175; it reads GFGGVPCSYFARGFCKNGASCRFVHSDG. The region spanning 258 to 334 is the RRM domain; it reads RQIYLTFPAD…RVLVKPYKEK (77 aa). 2 stretches are compositionally biased toward basic and acidic residues: residues 337–351 and 436–450; these read VPDKYRTNQTTEREL and EYDGGEKGKGSSKEG. 3 disordered regions span residues 337–365, 436–469, and 490–514; these read VPDKYRTNQTTERELSPTGLDSSPRDVLG, EYDGGEKGKGSSKEGSDDDTMNLPERLEDSLPDS, and SDLWSPSSDNDDNSTPSTLSDSFNS. Position 451 is a phosphoserine (S451). Residues 490–511 are compositionally biased toward low complexity; it reads SDLWSPSSDNDDNSTPSTLSDS.

Functionally, possesses RNA-binding and ribonuclease activities in vitro. This Arabidopsis thaliana (Mouse-ear cress) protein is Zinc finger CCCH domain-containing protein 46.